The chain runs to 369 residues: Anhydro-N-acetylmuramic acid kinase (369 aa).

Glycine 9–aspartate 16 contacts ATP.

It belongs to the anhydro-N-acetylmuramic acid kinase family.

The catalysed reaction is 1,6-anhydro-N-acetyl-beta-muramate + ATP + H2O = N-acetyl-D-muramate 6-phosphate + ADP + H(+). The protein operates within amino-sugar metabolism; 1,6-anhydro-N-acetylmuramate degradation. It participates in cell wall biogenesis; peptidoglycan recycling. Catalyzes the specific phosphorylation of 1,6-anhydro-N-acetylmuramic acid (anhMurNAc) with the simultaneous cleavage of the 1,6-anhydro ring, generating MurNAc-6-P. Is required for the utilization of anhMurNAc either imported from the medium or derived from its own cell wall murein, and thus plays a role in cell wall recycling. This Phenylobacterium zucineum (strain HLK1) protein is Anhydro-N-acetylmuramic acid kinase.